The primary structure comprises 517 residues: MIRTGKQYLESLNDGRNVWVGNEKIDNVATHPKTRDYAQRHADFYDLHHRPDLQDVMTFVDKDGERRTMQWFGHYDKEQLRRKRKYHETIMREMAGASFPRTPDVNNYVLQTYIDDPSPWETQTIGAEGKVKAKNIVDFVNFAKKHDLNCAPQFVDPQMDRSNPDAQQRSPGLRVIEKNDKGIVVSGVKAIGTGVAFADWIHIGVFFRPGIPGDQIIFAATPVNTPGVTIVCRESVVKEDPIEHPLASQGDELDGMTVFDNVFIPWSHVFHLGNPEHAKLYPQRVFDWLHYHALIRQSVRAELMAGLAILITEHIGTNKIPAVQTRVAKLIGFHQAMLAHIVASEELGFHTPGGAYKPNILIYDFGRALYLENFSQMIYELVDLSGRSALIFASEDQWNDEALNGWFERMNNGPVGQPHDRVKIGRVIRDLFLTDWGNRLFVFENFNGTPLQAIRMLTMQRAEFSAAGPYGTLARKVCGIELTEGHDSEYKATAGYAQALDSARHQEKLALSGTMTV.

It belongs to the FADH(2)-utilizing monooxygenase family. As to quaternary structure, homotetramer in solution.

It catalyses the reaction 2,4,6-trichlorophenol + FADH2 + O2 = 2-chloro-6-hydroxy-1,4-benzoquinone + FAD + 2 chloride + 3 H(+). It carries out the reaction 2,4,6-trichlorophenol + FADH2 + O2 = 2,6-dichlorobenzoquinone + FAD + chloride + H2O + H(+). The enzyme catalyses 2,6-dichlorobenzoquinone + H2O = 2-chloro-6-hydroxy-1,4-benzoquinone + chloride + 2 H(+). Its pathway is aromatic compound metabolism. The protein operates within xenobiotic degradation. In terms of biological role, involved in the degradation of 2,4,6-trichlorophenol (2,4,6-TCP). Catalyzes the conversion of 2,4,6-TCP to 6-chlorohydroxyquinol (6-CHQ). The monooxygenase oxidizes 2,4,6-TCP to 2,6-dichloroquinone (2,6-DCBQ), which remains with the enzyme and is hydrolyzed to 2-chlorohydroxyquinone. 2-chlorohydroxyquinone is chemically reduced by ascorbate and NADH to 6-chlorohydroxyquinol (6-CHQ). This Cupriavidus pinatubonensis (strain JMP 134 / LMG 1197) (Cupriavidus necator (strain JMP 134)) protein is 2,4,6-trichlorophenol monooxygenase.